We begin with the raw amino-acid sequence, 327 residues long: Aspartate--ammonia ligase (327 aa).

Belongs to the class-II aminoacyl-tRNA synthetase family. AsnA subfamily.

The protein localises to the cytoplasm. The enzyme catalyses L-aspartate + NH4(+) + ATP = L-asparagine + AMP + diphosphate + H(+). Its pathway is amino-acid biosynthesis; L-asparagine biosynthesis; L-asparagine from L-aspartate (ammonia route): step 1/1. The polypeptide is Aspartate--ammonia ligase (Bacillus cereus (strain B4264)).